We begin with the raw amino-acid sequence, 112 residues long: Citrate synthase (112 aa).

Residues H39 and D97 contribute to the active site.

This sequence belongs to the citrate synthase family.

The catalysed reaction is oxaloacetate + acetyl-CoA + H2O = citrate + CoA + H(+). It participates in carbohydrate metabolism; tricarboxylic acid cycle; isocitrate from oxaloacetate: step 1/2. The protein is Citrate synthase (gltA) of Bartonella vinsonii subsp. berkhoffii.